A 309-amino-acid chain; its full sequence is uncharacterized protein (309 aa).

Residues 1-32 (MTGTAPVSRRQYLGTAGAIIGTTAGCLTGADA) constitute a signal peptide (tat-type signal).

The protein belongs to the bacterial solute-binding protein 1 family. WtpA subfamily. Post-translationally, predicted to be exported by the Tat system. The position of the signal peptide cleavage has not been experimentally proven.

This is an uncharacterized protein from Halobacterium salinarum (strain ATCC 700922 / JCM 11081 / NRC-1) (Halobacterium halobium).